Here is a 427-residue protein sequence, read N- to C-terminus: Chaperone SurA (427 aa).

A signal peptide spans 1–13 (MLGVALLSGAVHA). PpiC domains follow at residues 164–265 (SEEY…KLEE) and 275–374 (RDEV…EVLG).

It is found in the periplasm. The enzyme catalyses [protein]-peptidylproline (omega=180) = [protein]-peptidylproline (omega=0). Its function is as follows. Chaperone involved in the correct folding and assembly of outer membrane proteins. Recognizes specific patterns of aromatic residues and the orientation of their side chains, which are found more frequently in integral outer membrane proteins. May act in both early periplasmic and late outer membrane-associated steps of protein maturation. The sequence is that of Chaperone SurA from Pseudomonas putida (strain ATCC 47054 / DSM 6125 / CFBP 8728 / NCIMB 11950 / KT2440).